A 102-amino-acid polypeptide reads, in one-letter code: NADH-quinone oxidoreductase subunit K (102 aa).

A run of 3 helical transmembrane segments spans residues 6–26 (LEHGLALASVLFALGLVGLMV), 30–50 (ILFVLMSLEVMMNAAALAFVV), and 62–82 (VMFILVLSLAAAEASIGLAIL).

Belongs to the complex I subunit 4L family. In terms of assembly, NDH-1 is composed of 13 different subunits. Subunits NuoA, H, J, K, L, M, N constitute the membrane sector of the complex.

It localises to the cell inner membrane. The enzyme catalyses a quinone + NADH + 5 H(+)(in) = a quinol + NAD(+) + 4 H(+)(out). In terms of biological role, NDH-1 shuttles electrons from NADH, via FMN and iron-sulfur (Fe-S) centers, to quinones in the respiratory chain. The immediate electron acceptor for the enzyme in this species is believed to be ubiquinone. Couples the redox reaction to proton translocation (for every two electrons transferred, four hydrogen ions are translocated across the cytoplasmic membrane), and thus conserves the redox energy in a proton gradient. This Pseudomonas aeruginosa (strain LESB58) protein is NADH-quinone oxidoreductase subunit K.